Here is a 219-residue protein sequence, read N- to C-terminus: Chloramphenicol acetyltransferase (219 aa).

His193 acts as the Proton acceptor in catalysis.

It belongs to the chloramphenicol acetyltransferase family.

The catalysed reaction is chloramphenicol + acetyl-CoA = chloramphenicol 3-acetate + CoA. Functionally, this enzyme is an effector of chloramphenicol resistance in bacteria. This chain is Chloramphenicol acetyltransferase (cat), found in Acinetobacter calcoaceticus subsp. anitratus.